The sequence spans 94 residues: Large ribosomal subunit protein uL29 (94 aa).

The segment at 66-94 (NPGERKSRVLSRAKRKKKNLARLSAKVKG) is disordered. The span at 73-94 (RVLSRAKRKKKNLARLSAKVKG) shows a compositional bias: basic residues.

This sequence belongs to the universal ribosomal protein uL29 family.

This chain is Large ribosomal subunit protein uL29, found in Leptospira borgpetersenii serovar Hardjo-bovis (strain JB197).